We begin with the raw amino-acid sequence, 275 residues long: Orotidine 5'-phosphate decarboxylase (275 aa).

Residue lysine 95 is the Proton donor of the active site.

It belongs to the OMP decarboxylase family. Type 2 subfamily.

It carries out the reaction orotidine 5'-phosphate + H(+) = UMP + CO2. The protein operates within pyrimidine metabolism; UMP biosynthesis via de novo pathway; UMP from orotate: step 2/2. The chain is Orotidine 5'-phosphate decarboxylase from Delftia acidovorans (strain DSM 14801 / SPH-1).